Here is a 608-residue protein sequence, read N- to C-terminus: Auxin response factor 3 (608 aa).

The disordered stretch occupies residues 1-40 (MGGLIDLNVMETEEDETQTQTPSSASGSVSPTSSSSASVS). The segment covering 18–40 (QTQTPSSASGSVSPTSSSSASVS) has biased composition (low complexity). A DNA-binding region (TF-B3) is located at residues 159–261 (FCKTLTASDT…KLRLGVRRAS (103 aa)).

It belongs to the ARF family. In terms of assembly, homo and heterodimers. In terms of tissue distribution, expressed in the whole plant.

It is found in the nucleus. Its function is as follows. Auxin response factors (ARFs) are transcriptional factors that bind specifically to the DNA sequence 5'-TGTCTC-3' found in the auxin-responsive promoter elements (AuxREs). Could act as transcriptional activator or repressor. Formation of heterodimers with Aux/IAA proteins may alter their ability to modulate early auxin response genes expression. Involved in the establishment or elaboration of tissue patterning during gynoecial development. The sequence is that of Auxin response factor 3 (ARF3) from Arabidopsis thaliana (Mouse-ear cress).